The primary structure comprises 776 residues: Isoamylase (776 aa).

A signal peptide spans 1 to 26 (MKCPKILAALLGCAVLAGVPAMPAHA). 5 residues coordinate Ca(2+): aspartate 154, glutamate 255, threonine 256, asparagine 258, and aspartate 285. Aspartate 401 functions as the Nucleophile in the catalytic mechanism. Cysteine 410 and cysteine 422 are disulfide-bonded. Glutamate 461 (proton donor) is an active-site residue. Intrachain disulfides connect cysteine 546–cysteine 616 and cysteine 738–cysteine 766.

This sequence belongs to the glycosyl hydrolase 13 family. As to quaternary structure, monomer. Requires Ca(2+) as cofactor.

It is found in the secreted. It carries out the reaction Hydrolysis of (1-&gt;6)-alpha-D-glucosidic branch linkages in glycogen, amylopectin and their beta-limit dextrins.. In Pseudomonas amyloderamosa, this protein is Isoamylase (iam).